Here is a 355-residue protein sequence, read N- to C-terminus: Methylxanthine N3-demethylase NdmB (355 aa).

The region spanning 19-131 is the Rieske domain; that stretch reads WHPVCTLNEF…CEVKYDIVWV (113 aa). [2Fe-2S] cluster contacts are provided by C64, H66, C87, and H90.

[2Fe-2S] cluster serves as cofactor.

The catalysed reaction is theobromine + NADH + O2 + H(+) = 7-methylxanthine + formaldehyde + NAD(+) + H2O. It catalyses the reaction theobromine + NADPH + O2 + H(+) = 7-methylxanthine + formaldehyde + NADP(+) + H2O. The enzyme catalyses 3-methylxanthine + NADH + O2 + H(+) = xanthine + formaldehyde + NAD(+) + H2O. It carries out the reaction 3-methylxanthine + NADPH + O2 + H(+) = xanthine + formaldehyde + NADP(+) + H2O. In terms of biological role, involved in the caffeine degradation, which is the essential first step for assimilating the carbon and nitrogen in caffeine. Catalyzes the N3-demethylation of theobromine to produce 7-methylxanthine and formaldehyde. Also catalyzes the N3-demethylation of 3-methylxanthine, caffeine, and theophylline to xanthine, paraxanthine, and 1-methylxanthine, respectively. NADH is the preferred substrate. This Pseudomonas putida (Arthrobacter siderocapsulatus) protein is Methylxanthine N3-demethylase NdmB (ndmB).